A 554-amino-acid polypeptide reads, in one-letter code: Macrophage colony-stimulating factor 1 (554 aa).

An N-terminal signal peptide occupies residues 1-32 (MTAPGAAGRCPPTTWLGSLLLLVCLLASRSIT). At 33-496 (EEVSEYCSHM…GSFSPQLQES (464 aa)) the chain is on the lumenal side. Disulfide bonds link Cys-39-Cys-122, Cys-80-Cys-171, and Cys-134-Cys-178. Asn-154 and Asn-172 each carry an N-linked (GlcNAc...) asparagine glycan. A disordered region spans residues 224–488 (EDSEGTEGSS…TGHERQSEGS (265 aa)). Thr-266 carries the phosphothreonine; by FAM20C modification. An O-linked (Xyl...) (chondroitin sulfate) serine glycan is attached at Ser-309. Over residues 344-354 (LSASSPLPASA) the composition is skewed to low complexity. Residues Thr-363 and Thr-365 are each glycosylated (O-linked (GalNAc...) threonine). The segment covering 404–433 (RISSLRPQGLSNPSTLSAQPQLSRSHSSGS) has biased composition (polar residues). The tract at residues 406–426 (SSLRPQGLSNPSTLSAQPQLS) is O-glycosylated at one site. The segment covering 440–453 (LEGRRSTRDRRSPA) has biased composition (basic and acidic residues). A helical membrane pass occupies residues 497 to 517 (VFHLLVPSVILVLLAVGGLLF). Residues 518–554 (YRWRRRSHQEPQRADSPLEQPEGSPLTQDDRQVELPV) are Cytoplasmic-facing. Positions 526–554 (QEPQRADSPLEQPEGSPLTQDDRQVELPV) are disordered. The span at 545 to 554 (QDDRQVELPV) shows a compositional bias: basic and acidic residues.

In terms of assembly, homodimer or heterodimer; disulfide-linked. Likely to exist in multiple forms: homodimer consisting of 2 identical 150-200 kDa proteoglycan subunits, heterodimer consisting of a 150-200 kDa proteoglycan subunit and a truncated 43 kDa subunit, and homodimer consisting of 2 identical 43 kDa subunits. Interacts with CSF1R. In terms of processing, N-glycosylated. O-glycosylated; contains chondroitin sulfate. O-glycosylated with core 1 or possibly core 8 glycans. Post-translationally, O-glycosylated.

It localises to the cell membrane. The protein resides in the secreted. The protein localises to the extracellular space. In terms of biological role, cytokine that plays an essential role in the regulation of survival, proliferation and differentiation of hematopoietic precursor cells, especially mononuclear phagocytes, such as macrophages and monocytes. Promotes the release of pro-inflammatory chemokines, and thereby plays an important role in innate immunity and in inflammatory processes. Plays an important role in the regulation of osteoclast proliferation and differentiation, the regulation of bone resorption, and is required for normal bone development. Required for normal male and female fertility. Promotes reorganization of the actin cytoskeleton, regulates formation of membrane ruffles, cell adhesion and cell migration. Plays a role in lipoprotein clearance. The sequence is that of Macrophage colony-stimulating factor 1 (CSF1) from Homo sapiens (Human).